A 134-amino-acid chain; its full sequence is Profilin-4 (134 aa).

It belongs to the profilin family. In terms of assembly, occurs in many kinds of cells as a complex with monomeric actin in a 1:1 ratio. In terms of tissue distribution, specifically expressed in mature and germinating pollen grains, and growing pollen tubes (at protein level).

The protein resides in the cytoplasm. The protein localises to the cytoskeleton. Its function is as follows. Binds to actin monomers and regulates the organization of the actin cytoskeleton. At high concentrations, profilin prevents the polymerization of actin, whereas it enhances it at low concentrations. At low concentrations, associates with the poly-proline motif of formins to enhance actin filament elongation rate. Acts redundantly with PRF5 to regulate apical actin polymerization at the tip of pollen tube and control polarized pollen tube growth. Functions probably by favoring formin-mediated actin polymerization at pollen tube tips. The chain is Profilin-4 from Arabidopsis thaliana (Mouse-ear cress).